The primary structure comprises 125 residues: Barwin (125 aa).

Position 1 is a pyrrolidone carboxylic acid (Gln-1). The Barwin domain occupies 1–125 (QQANDVRATY…VNYQFVDCRD (125 aa)). 3 disulfides stabilise this stretch: Cys-31–Cys-63, Cys-52–Cys-86, and Cys-66–Cys-123.

In terms of biological role, may be involved in a defense mechanism. Probable plant lectin. Binds weakly a chitin analog. In Hordeum vulgare (Barley), this protein is Barwin.